Reading from the N-terminus, the 152-residue chain is Transcriptional regulator MraZ (152 aa).

SpoVT-AbrB domains are found at residues 5–52 (ATLV…PLPE) and 81–124 (ASEC…DETT).

Belongs to the MraZ family. In terms of assembly, forms oligomers.

It localises to the cytoplasm. The protein localises to the nucleoid. Functionally, negatively regulates its own expression and that of the subsequent genes in the proximal part of the division and cell wall (dcw) gene cluster. Acts by binding directly to DNA. May also regulate the expression of genes outside the dcw cluster. In Klebsiella pneumoniae subsp. pneumoniae (strain ATCC 700721 / MGH 78578), this protein is Transcriptional regulator MraZ.